The following is an 890-amino-acid chain: Wolframin (890 aa).

Met-1 bears the N-acetylmethionine mark. The span at 1-20 (MNSGTPPPSPSGPPPPPAPQ) shows a compositional bias: pro residues. Residues 1–83 (MNSGTPPPSP…ETDRAGPMKA (83 aa)) form a disordered region. Positions 1–323 (MNSGTPPPSP…MHWLSTIVPT (323 aa)) are interaction with ATP6V1A. Thr-30 carries the post-translational modification Phosphothreonine. Ser-32 is subject to Phosphoserine. Over residues 50–67 (PSAGRSAGEAAAPEPRAP) the composition is skewed to low complexity. Residues 71–83 (SREETDRAGPMKA) show a composition bias toward basic and acidic residues. At Ser-158 the chain carries Phosphoserine. A disordered region spans residues 208-227 (VNEQDGGAQPGPVPKSLQKQ). Helical transmembrane passes span 314 to 334 (MHWL…FFFI), 340 to 360 (IDFF…VSMV), 402 to 422 (NHLE…FSFP), 427 to 447 (DCIP…TSYM), 465 to 485 (VAAG…FLKV), 496 to 516 (GHFI…LFYL), 529 to 549 (TYCY…SVVI), 563 to 583 (IGYF…ALMG), 589 to 609 (RWFL…CGVP), and 632 to 652 (SSMV…CWFY). Residues 653–869 (VYRSEGMKVY…HVKIEQDWRS (217 aa)) are Lumenal-facing. Residues Asn-663 and Asn-748 are each glycosylated (N-linked (GlcNAc...) asparagine). Residues 870–890 (TVHGALKFAFDFFFFPFLSAA) form a helical membrane-spanning segment.

Interacts with ATP6V1A. In terms of tissue distribution, highly expressed in the developing lens.

The protein resides in the endoplasmic reticulum membrane. It is found in the cytoplasmic vesicle. The protein localises to the secretory vesicle. Its function is as follows. Participates in the regulation of cellular Ca(2+) homeostasis, at least partly, by modulating the filling state of the endoplasmic reticulum Ca(2+) store. Negatively regulates the ER stress response and positively regulates the stability of V-ATPase subunits ATP6V1A and ATP1B1 by preventing their degradation through an unknown proteasome-independent mechanism. The chain is Wolframin (Wfs1) from Mus musculus (Mouse).